Consider the following 680-residue polypeptide: tRNA 5-methylaminomethyl-2-thiouridine biosynthesis bifunctional protein MnmC (680 aa).

Residues methionine 1 to proline 267 are tRNA (mnm(5)s(2)U34)-methyltransferase. The tract at residues isoleucine 273–leucine 680 is FAD-dependent cmnm(5)s(2)U34 oxidoreductase.

It in the N-terminal section; belongs to the methyltransferase superfamily. tRNA (mnm(5)s(2)U34)-methyltransferase family. In the C-terminal section; belongs to the DAO family. The cofactor is FAD.

Its subcellular location is the cytoplasm. The catalysed reaction is 5-aminomethyl-2-thiouridine(34) in tRNA + S-adenosyl-L-methionine = 5-methylaminomethyl-2-thiouridine(34) in tRNA + S-adenosyl-L-homocysteine + H(+). Its function is as follows. Catalyzes the last two steps in the biosynthesis of 5-methylaminomethyl-2-thiouridine (mnm(5)s(2)U) at the wobble position (U34) in tRNA. Catalyzes the FAD-dependent demodification of cmnm(5)s(2)U34 to nm(5)s(2)U34, followed by the transfer of a methyl group from S-adenosyl-L-methionine to nm(5)s(2)U34, to form mnm(5)s(2)U34. The chain is tRNA 5-methylaminomethyl-2-thiouridine biosynthesis bifunctional protein MnmC from Shewanella putrefaciens (strain CN-32 / ATCC BAA-453).